A 407-amino-acid chain; its full sequence is Arginine deiminase (407 aa).

C397 functions as the Amidino-cysteine intermediate in the catalytic mechanism.

Belongs to the arginine deiminase family.

The protein localises to the cytoplasm. It carries out the reaction L-arginine + H2O = L-citrulline + NH4(+). The protein operates within amino-acid degradation; L-arginine degradation via ADI pathway; carbamoyl phosphate from L-arginine: step 1/2. This chain is Arginine deiminase, found in Listeria welshimeri serovar 6b (strain ATCC 35897 / DSM 20650 / CCUG 15529 / CIP 8149 / NCTC 11857 / SLCC 5334 / V8).